Reading from the N-terminus, the 251-residue chain is Ubiquinone/menaquinone biosynthesis C-methyltransferase UbiE (251 aa).

S-adenosyl-L-methionine-binding positions include threonine 74, aspartate 95, and 123 to 124; that span reads NA.

Belongs to the class I-like SAM-binding methyltransferase superfamily. MenG/UbiE family.

The enzyme catalyses a 2-demethylmenaquinol + S-adenosyl-L-methionine = a menaquinol + S-adenosyl-L-homocysteine + H(+). It catalyses the reaction a 2-methoxy-6-(all-trans-polyprenyl)benzene-1,4-diol + S-adenosyl-L-methionine = a 5-methoxy-2-methyl-3-(all-trans-polyprenyl)benzene-1,4-diol + S-adenosyl-L-homocysteine + H(+). Its pathway is quinol/quinone metabolism; menaquinone biosynthesis; menaquinol from 1,4-dihydroxy-2-naphthoate: step 2/2. It functions in the pathway cofactor biosynthesis; ubiquinone biosynthesis. In terms of biological role, methyltransferase required for the conversion of demethylmenaquinol (DMKH2) to menaquinol (MKH2) and the conversion of 2-polyprenyl-6-methoxy-1,4-benzoquinol (DDMQH2) to 2-polyprenyl-3-methyl-6-methoxy-1,4-benzoquinol (DMQH2). The polypeptide is Ubiquinone/menaquinone biosynthesis C-methyltransferase UbiE (Shewanella putrefaciens (strain CN-32 / ATCC BAA-453)).